A 421-amino-acid polypeptide reads, in one-letter code: D-amino acid dehydrogenase (421 aa).

Position 3–17 (3–17) interacts with FAD; sequence ILILGSGVVGTASAY.

The protein belongs to the DadA oxidoreductase family. It depends on FAD as a cofactor.

It carries out the reaction a D-alpha-amino acid + A + H2O = a 2-oxocarboxylate + AH2 + NH4(+). Its pathway is amino-acid degradation; D-alanine degradation; NH(3) and pyruvate from D-alanine: step 1/1. In terms of biological role, oxidative deamination of D-amino acids. The polypeptide is D-amino acid dehydrogenase (Xanthobacter autotrophicus (strain ATCC BAA-1158 / Py2)).